The sequence spans 299 residues: Acetylglutamate kinase (299 aa).

Residues 62–63, R84, and N188 contribute to the substrate site; that span reads GG.

This sequence belongs to the acetylglutamate kinase family. ArgB subfamily.

The protein localises to the cytoplasm. The enzyme catalyses N-acetyl-L-glutamate + ATP = N-acetyl-L-glutamyl 5-phosphate + ADP. It functions in the pathway amino-acid biosynthesis; L-arginine biosynthesis; N(2)-acetyl-L-ornithine from L-glutamate: step 2/4. In terms of biological role, catalyzes the ATP-dependent phosphorylation of N-acetyl-L-glutamate. The chain is Acetylglutamate kinase from Methanosarcina acetivorans (strain ATCC 35395 / DSM 2834 / JCM 12185 / C2A).